A 130-amino-acid chain; its full sequence is Small ribosomal subunit protein uS8 (130 aa).

The protein belongs to the universal ribosomal protein uS8 family. In terms of assembly, part of the 30S ribosomal subunit.

Functionally, one of the primary rRNA binding proteins, it binds directly to 16S rRNA central domain where it helps coordinate assembly of the platform of the 30S subunit. The protein is Small ribosomal subunit protein uS8 of Cenarchaeum symbiosum (strain A).